A 557-amino-acid polypeptide reads, in one-letter code: NADH-quinone oxidoreductase subunit C/D (557 aa).

A compositionally biased stretch (acidic residues) spans 1–13 (MSLEEQQSDDPAE). The disordered stretch occupies residues 1–20 (MSLEEQQSDDPAELESGVSR). The interval 1–174 (MSLEEQQSDD…ATLREHANPL (174 aa)) is NADH dehydrogenase I subunit C. An NADH dehydrogenase I subunit D region spans residues 184–557 (NTMYINIGPH…LDIVLGEVDR (374 aa)). A Glycyl lysine isopeptide (Lys-Gly) (interchain with G-Cter in SAMP2) cross-link involves residue lysine 517.

This sequence in the N-terminal section; belongs to the complex I 30 kDa subunit family. The protein in the C-terminal section; belongs to the complex I 49 kDa subunit family. As to quaternary structure, NDH-1 is composed of 13 different subunits. Subunits NuoB, CD, E, F, and G constitute the peripheral sector of the complex.

The protein resides in the cell membrane. The enzyme catalyses a quinone + NADH + 5 H(+)(in) = a quinol + NAD(+) + 4 H(+)(out). In terms of biological role, NDH-1 shuttles electrons from NADH, via FMN and iron-sulfur (Fe-S) centers, to quinones in the respiratory chain. Couples the redox reaction to proton translocation (for every two electrons transferred, four hydrogen ions are translocated across the cytoplasmic membrane), and thus conserves the redox energy in a proton gradient. The chain is NADH-quinone oxidoreductase subunit C/D (nuoCD) from Haloferax volcanii (strain ATCC 29605 / DSM 3757 / JCM 8879 / NBRC 14742 / NCIMB 2012 / VKM B-1768 / DS2) (Halobacterium volcanii).